The primary structure comprises 1253 residues: MTTHVTLEDALSNVDLLEELPLPDQQPCIEPPPSSIMYQANFDTNFEDRNAFVTGIARYIEQATVHSSMNEMLEEGHEYAVMLYTWRSCSRAIPQVKCNEQPNRVEIYEKTVEVLEPEVTKLMKFMYFQRKAIERFCSEVKRLCHAERRKDFVSEAYLLTLGKFINMFAVLDELKNMKCSVKNDHSAYKRAAQFLRKMADPQSIQESQNLSMFLANHNRITQCLHQQLEVIPGYEELLADIVNICVDYYENKMYLTPSEKHMLLKVMGFGLYLMDGNVSNIYKLDAKKRINLSKIDKFFKQLQVVPLFGDMQIELARYIETSAHYEENKSKWTCTQSSISPQYNICEQMVQIRDDHIRFISELARYSNSEVVTGSGLDSQKSDEEYRELFDLALRGLQLLSKWSAHVMEVYSWKLVHPTDKFCNKDCPGTAEEYERATRYNYTSEEKFAFVEVIAMIKGLQVLMGRMESVFNQAIRNTIYAALQDFAQVTLREPLRQAVRKKKNVLISVLQAIRKTICDWEGGREPPNDPCLRGEKDPKGGFDIKVPRRAVGPSSTQLYMVRTMLESLIADKSGSKKTLRSSLDGPIVLAIEDFHKQSFFFTHLLNISEALQQCCDLSQLWFREFFLELTMGRRIQFPIEMSMPWILTDHILETKEPSMMEYVLYPLDLYNDSAYYALTKFKKQFLYDEIEAEVNLCFDQFVYKLADQIFAYYKAMAGSVLLDKRFRAECKNYGVIIPYPPSNRYETLLKQRHVQLLGRSIDLNRLITQRISAAMYKSLDQAISRFESEDLTSIVELEWLLEINRLTHRLLCKHMTLDSFDAMFREANHNVSAPYGRITLHVFWELNFDFLPNYCYNGSTNRFVRTAIPFTQEPQRDKPANIQPYYLYGSKPLNIAYSHIYSSYRNFVGPPHFKTICRLLGYQGIAVVMEELLKIVESLLQGTILQYVKTLIEVMPKICRLPRHEYGSPGILEFFHHQLKDIIEYAELKTDVFQSLREVGNAILFCLLIEQALSQEEVCDLLHAAPFQNILPRVYIKEGERLEVRMKRLEAKYAPLHLVPLIERLGTPQQIAIAREGDLLTKERLCCGLSMFEVILTRIRSYLQDPIWRGPPPTNGVMHVDECVEFHRLWSAMQFVYCIPVGTNEFTAEQCFGDGLNWAGCSIIVLLGQQRRFDLFDFCYHLLKVQRQDGKDEIIKNVPLKKMADRIRKYQILNNEVFAILNKYMKSVETDSSTVEHVRCFQPPIHQSLATTC.

An N6-acetyllysine modification is found at lysine 1037.

This sequence belongs to the CYFIP family. In terms of assembly, component of the WAVE1 complex composed of ABI2, CYFIP2, BRK1, NCKAP1 and WASF1/WAVE1. Interacts with RAC1 (activated form) which causes the complex to dissociate, releasing activated WASF1. The complex can also be activated by NCK1. Interacts with SHANK3; the interaction mediates the association of SHANK3 with the WAVE1 complex. Interacts with FMR1; the interaction occurs in a RNA-dependent manner. Interacts with FXR1 and FXR2. Interacts with TMEM108 (via N-terminus); the interaction associates TMEM108 with the WAVE1 complex.

The protein localises to the cytoplasm. The protein resides in the nucleus. It localises to the perinuclear region. It is found in the synapse. Its subcellular location is the synaptosome. Involved in T-cell adhesion and p53-dependent induction of apoptosis. Does not bind RNA. As component of the WAVE1 complex, required for BDNF-NTRK2 endocytic trafficking and signaling from early endosomes. This Pongo abelii (Sumatran orangutan) protein is Cytoplasmic FMR1-interacting protein 2.